We begin with the raw amino-acid sequence, 416 residues long: Glutamyl-tRNA reductase (416 aa).

Residues 51 to 54 (TCNR), Ser110, 115 to 117 (EPQ), and Gln121 each bind substrate. Cys52 functions as the Nucleophile in the catalytic mechanism. 190–195 (GAGQTG) contacts NADP(+).

The protein belongs to the glutamyl-tRNA reductase family. In terms of assembly, homodimer.

It carries out the reaction (S)-4-amino-5-oxopentanoate + tRNA(Glu) + NADP(+) = L-glutamyl-tRNA(Glu) + NADPH + H(+). It participates in porphyrin-containing compound metabolism; protoporphyrin-IX biosynthesis; 5-aminolevulinate from L-glutamyl-tRNA(Glu): step 1/2. Its function is as follows. Catalyzes the NADPH-dependent reduction of glutamyl-tRNA(Glu) to glutamate 1-semialdehyde (GSA). In Francisella tularensis subsp. tularensis (strain FSC 198), this protein is Glutamyl-tRNA reductase.